A 269-amino-acid chain; its full sequence is MEPTQVAENLVPNQQPPVPDLEDPEDTRDESPENSDTVVLSLFPCTPDAVNPEADASASSLQGSFLKHSTTLTNRQRGNEVSALPATLDSLSIHQLAAQGELSQLKDHLRKGACPACTCLSGNNLINKPDERGFTPLIWASAFGEIETVRFLLDWGADPHILAKERESALSLASMGGYTDIVRLLLDRDVDINIYDWNGGTPLLYAVRGNHVKCVEALLARGADLTTEADSGYTPMDLAVALGYRKVQQVMESHILRLFQSTLGPVDPE.

The tract at residues 1 to 36 (MEPTQVAENLVPNQQPPVPDLEDPEDTRDESPENSD) is disordered. 5 ANK repeats span residues 88–127 (LDSLSIHQLAAQGELSQLKDHLRKGACPACTCLSGNNLIN), 132–161 (RGFTPLIWASAFGEIETVRFLLDWGADPHI), 165–194 (ERESALSLASMGGYTDIVRLLLDRDVDINI), 198–227 (NGGTPLLYAVRGNHVKCVEALLARGADLTT), and 231–260 (SGYTPMDLAVALGYRKVQQVMESHILRLFQ).

Forms homodimers. The RFX heterotetrameric complex consists of 2 molecules of RFX5 and one each of RFXAP and RFX-B/RFXANK; with each subunit representing a separate complementation group. Interacts (via ankyrin repeats) with RFX5 (via PxLPxI/L motif); the interaction is direct. RFX forms cooperative DNA binding complexes with X2BP and CBF/NF-Y. RFX associates with CIITA to form an active transcriptional complex. Interacts with RAF1. Interacts with RFX7. Post-translationally, phosphorylated by RAF1. Expressed primarily in thymus, lung and testis.

Its subcellular location is the cytoplasm. The protein resides in the nucleus. Its function is as follows. Activates transcription from class II MHC promoters. Activation requires the activity of the MHC class II transactivator/CIITA. May regulate other genes in the cell. RFX binds the X1 box of MHC-II promoters. May also potentiate the activation of RAF1. This is DNA-binding protein RFXANK (Rfxank) from Mus musculus (Mouse).